A 355-amino-acid chain; its full sequence is MKEQLKPLLEDKTYLRHFWHPVCTLNEFERANASGHGPMGVTLLGEKLVLARLNSKIIAAADRCAHRSAQLSIGRVCSNAGKDYLECPYHGWRYDEAGACQLIPACPDKSISPRAKISSFDCEVKYDIVWVRLDNSFDCTQIPYLSDFDNPDMQVIVADSYIWETVAERRWENFTDFSHFAFVHPGTLYDPFFASHPTVYVNRVDGELQFKLAPPREMKGIPPEAPMGDFTYRCTMPYSVNLEIKLWKDDSRFVLWTTASPVDNKSCRNFMIIVREKDNQPDHMHLAFQKRVLDEDQPVIESQWPLEIQTSEVSVATDKISVQFRKWHKELSLSAVEGREAFRDSVLTNVIEEEQ.

The 113-residue stretch at 19-131 (WHPVCTLNEF…CEVKYDIVWV (113 aa)) folds into the Rieske domain. 4 residues coordinate [2Fe-2S] cluster: C64, H66, C87, and H90.

Requires [2Fe-2S] cluster as cofactor.

The enzyme catalyses theobromine + NADH + O2 + H(+) = 7-methylxanthine + formaldehyde + NAD(+) + H2O. It catalyses the reaction theobromine + NADPH + O2 + H(+) = 7-methylxanthine + formaldehyde + NADP(+) + H2O. It carries out the reaction 3-methylxanthine + NADH + O2 + H(+) = xanthine + formaldehyde + NAD(+) + H2O. The catalysed reaction is 3-methylxanthine + NADPH + O2 + H(+) = xanthine + formaldehyde + NADP(+) + H2O. Its function is as follows. Involved in the caffeine degradation, which is the essential first step for assimilating the carbon and nitrogen in caffeine. Catalyzes the N3-demethylation of theobromine to produce 7-methylxanthine and formaldehyde. Also catalyzes the N3-demethylation of 3-methylxanthine, caffeine, and theophylline to xanthine, paraxanthine, and 1-methylxanthine, respectively. NADH is the preferred substrate. The polypeptide is Methylxanthine N3-demethylase NdmB (ndmB) (Pseudomonas putida (Arthrobacter siderocapsulatus)).